Here is a 142-residue protein sequence, read N- to C-terminus: Glutamate-rich protein 2 (142 aa).

Disordered regions lie at residues 1 to 55 and 104 to 142; these read MSKN…HAPL and EKAQ…CEDG. Over residues 9–27 the composition is skewed to basic and acidic residues; the sequence is EQEKNNEHCPEDINDKLSE. A compositionally biased stretch (acidic residues) spans 28 to 43; the sequence is STDDDGEDTSDEDKEE. Residues 44–53 are compositionally biased toward basic and acidic residues; it reads DSNPNKDTHA. Residues 109–142 are compositionally biased toward acidic residues; that stretch reads LEEDDDESEEDNSESEGESTEDPSEESSDECEDG.

The chain is Glutamate-rich protein 2 (ERICH2) from Bos taurus (Bovine).